Here is a 291-residue protein sequence, read N- to C-terminus: Undecaprenyl-diphosphatase (291 aa).

The next 8 membrane-spanning stretches (helical) occupy residues 1–21, 48–68, 99–119, 123–143, 159–179, 200–220, 236–256, and 269–289; these read MLILELIKGIILGIVEGLTEF, SAFTFKIVIQLGSVFAGAWVF, LHIIVGMIPAGVLGLLFDDVI, LFSVPTVMIGLFIGAIYMIIA, INYFQAFVIGLSQAIAMWPGF, SDFTFIMAVPVMLAASGLSLV, LGFLAAFIVGLIAIKTFLYLI, and IVLVIIIAILYFGFGIGQGIT.

It belongs to the UppP family.

Its subcellular location is the cell membrane. The catalysed reaction is di-trans,octa-cis-undecaprenyl diphosphate + H2O = di-trans,octa-cis-undecaprenyl phosphate + phosphate + H(+). In terms of biological role, catalyzes the dephosphorylation of undecaprenyl diphosphate (UPP). Confers resistance to bacitracin. The chain is Undecaprenyl-diphosphatase from Staphylococcus saprophyticus subsp. saprophyticus (strain ATCC 15305 / DSM 20229 / NCIMB 8711 / NCTC 7292 / S-41).